The following is a 726-amino-acid chain: Pre-mRNA-splicing factor CLF1 (726 aa).

HAT repeat units follow at residues 55-87 (EFQARKRTEFESRIRYSRDSILAWTKYAQWEAS), 89-121 (NEYERSRSVFERALDVDPRSVDLWIKYTDMELK), 123-155 (RNINHARNLFDRAITLLPRVDALWYKYVYLEEL), 157-188 (LNVSGARQIFERWMQWEPNDKAWQSYIKLEER), 190-221 (NELDRASAIYERWIACRPIPKNWVTWAKFEED), 223-262 (GQPDKAREVFQTALEFFGDEEEQVEKAQSVFAAFARMETR), 264-298 (KEFERARVIYKFALARLPRSKSASLYAQYTKFEKQ), 308-340 (TVLGKRRIQYEEELAYDPTNYDAWFSLARLEED), 352-386 (VEPMRVREVYERAVANVPPALEKRYWRRYIYLWLQ), 396-432 (KDYDRARDVYKAAVKLVPHKTFTFAKLWLAYAYFEIR), 434-465 (LDVSAARKVLGAGIGMCPKPKLFTGYIELEMR), 467-499 (REFDRVRTLYEKFLTYDPSLSSAWIQWTQVESA), 501-534 (EDFERVRAIFELAVQQSLDMPEIVWKAYIDFEAG), 536-567 (GERERARNLYERLLERTSHVKVWISYALMEIA), 585-626 (GDAD…EHGD), and 635-667 (DMLPTTRKRWRKAEDGSGELEEYWDLVFPDDER). The interval 682 to 726 (AWAQQRAGQGEEGGLSYDLPSDSEDENEDGDEDGDGREEEGMDQD) is disordered. Acidic residues predominate over residues 702–726 (SDSEDENEDGDEDGDGREEEGMDQD).

This sequence belongs to the crooked-neck family. As to quaternary structure, associated with the spliceosome.

The protein resides in the nucleus. Involved in pre-mRNA splicing and cell cycle progression. Required for the spliceosome assembly and initiation of the DNA replication. This is Pre-mRNA-splicing factor CLF1 (CLF1) from Cryptococcus neoformans var. neoformans serotype D (strain B-3501A) (Filobasidiella neoformans).